A 545-amino-acid polypeptide reads, in one-letter code: Bifunctional purine biosynthesis protein PurH (545 aa).

In terms of domain architecture, MGS-like spans M1–T150.

This sequence belongs to the PurH family.

It catalyses the reaction (6R)-10-formyltetrahydrofolate + 5-amino-1-(5-phospho-beta-D-ribosyl)imidazole-4-carboxamide = 5-formamido-1-(5-phospho-D-ribosyl)imidazole-4-carboxamide + (6S)-5,6,7,8-tetrahydrofolate. It carries out the reaction IMP + H2O = 5-formamido-1-(5-phospho-D-ribosyl)imidazole-4-carboxamide. The protein operates within purine metabolism; IMP biosynthesis via de novo pathway; 5-formamido-1-(5-phospho-D-ribosyl)imidazole-4-carboxamide from 5-amino-1-(5-phospho-D-ribosyl)imidazole-4-carboxamide (10-formyl THF route): step 1/1. Its pathway is purine metabolism; IMP biosynthesis via de novo pathway; IMP from 5-formamido-1-(5-phospho-D-ribosyl)imidazole-4-carboxamide: step 1/1. This Bifidobacterium longum (strain NCC 2705) protein is Bifunctional purine biosynthesis protein PurH.